The chain runs to 483 residues: SET domain and MYND-type zinc finger protein 6 (483 aa).

Positions P4–I228 constitute an SET domain. C49, C52, C62, C65, C71, C75, H83, and C87 together coordinate Zn(2+). The MYND-type zinc-finger motif lies at C49 to C87.

The protein belongs to the class V-like SAM-binding methyltransferase superfamily.

It is found in the cytoplasm. Its subcellular location is the nucleus. The polypeptide is SET domain and MYND-type zinc finger protein 6 (set6) (Schizosaccharomyces pombe (strain 972 / ATCC 24843) (Fission yeast)).